A 186-amino-acid chain; its full sequence is Elongation factor P (186 aa).

Belongs to the elongation factor P family.

It is found in the cytoplasm. It participates in protein biosynthesis; polypeptide chain elongation. In terms of biological role, involved in peptide bond synthesis. Stimulates efficient translation and peptide-bond synthesis on native or reconstituted 70S ribosomes in vitro. Probably functions indirectly by altering the affinity of the ribosome for aminoacyl-tRNA, thus increasing their reactivity as acceptors for peptidyl transferase. The chain is Elongation factor P from Shewanella halifaxensis (strain HAW-EB4).